The chain runs to 2081 residues: Non-reducing polyketide synthase terA (2081 aa).

Positions 85-190 (TLTLAFRIGV…ISLDIFAPFH (106 aa)) are N-terminal acylcarrier protein transacylase (SAT) domain (SAT). Positions 316–749 (AQKIAIVGMA…GGNTGLLLED (434 aa)) constitute a Ketosynthase family 3 (KS3) domain. Active-site for beta-ketoacyl synthase activity residues include Cys-488, His-623, and His-667. Residues 849-1147 (LFTGQGSHYT…LTLPSLRKQE (299 aa)) form a malonyl-CoA:ACP transacylase (MAT) domain region. The N-terminal hotdog fold stretch occupies residues 1230 to 1364 (QKVIKEDFGQ…CHVEYGDIKT (135 aa)). The PKS/mFAS DH domain maps to 1230–1539 (QKVIKEDFGQ…FKAIPRAVIN (310 aa)). A product template (PT) domain region spans residues 1259–1536 (VTGHLVNGSA…GVKFKAIPRA (278 aa)). His-1262 functions as the Proton acceptor; for dehydratase activity in the catalytic mechanism. The C-terminal hotdog fold stretch occupies residues 1392–1539 (YQKLDRKAAY…FKAIPRAVIN (148 aa)). Asp-1452 (proton donor; for dehydratase activity) is an active-site residue. A disordered region spans residues 1549-1578 (KALEKSAPRQNPKATATKTTQKPQAPVPVP). The span at 1558 to 1572 (QNPKATATKTTQKPQ) shows a compositional bias: low complexity. The 79-residue stretch at 1580–1658 (KQNKAIIDDF…QVKELILKLA (79 aa)) folds into the Carrier 1 domain. Ser-1617 carries the O-(pantetheine 4'-phosphoryl)serine modification. A disordered region spans residues 1659-1700 (GSSSDENTTDTPDEEEDPATADADNTEMIRENPLESVSPNVS). Residues 1665–1677 (NTTDTPDEEEDPA) show a composition bias toward acidic residues. The 78-residue stretch at 1699–1776 (VSSSEAMDGF…QARLAIASLM (78 aa)) folds into the Carrier 2 domain. Residue Ser-1736 is modified to O-(pantetheine 4'-phosphoryl)serine. The interval 1783-1809 (GATTPYSGSDDAKSSTSSLTAGSVLTP) is disordered. The tract at residues 1840 to 2070 (TLFLLPDGSG…TMMREPKVNQ (231 aa)) is thioesterase (TE) domain.

It carries out the reaction 3 malonyl-CoA + acetyl-CoA + 2 H(+) = orsellinate + 3 CO2 + 4 CoA. It participates in secondary metabolite biosynthesis. In terms of biological role, non-reducing polyketide synthase; part of the gene cluster that mediates the biosynthesis of terrein, a fungal metabolite with ecological, antimicrobial, antiproliferative, and antioxidative activities. The first step in the pathway is performed by the polyketide synthase terA that produces 4-hydroxy-6-methylpyranon (4-HMP), orsellinic acid (OA), and 2,3-dehydro-6-hydroxymellein (2,3-dehydro-6-HM) by condensing acetyl-CoA with two, three, or four malonyl-CoA units, respectively. 4-HMP and OA are not pathway intermediates, but are rather shunt or side products. 2,3-dehydro-6-HM is further converted to 6-hydroxymellein (6-HM) by the 6-hydroxymellein synthase terB. The monooxygenases terC and terD, the multicopper oxidase terE and the Kelch-like protein terF are then involved in the transformation of 6-HM to terrein. Even if they are co-regulated with the other terrein cluster genes, terH and terI seem to be dispensable for terrein production; whereas one or both of the 2 transporters terG and terJ are probably required for efficient secretion of metabolites. This is Non-reducing polyketide synthase terA from Aspergillus terreus (strain NIH 2624 / FGSC A1156).